We begin with the raw amino-acid sequence, 451 residues long: Phosphoglucosamine mutase (451 aa).

Catalysis depends on Ser102, which acts as the Phosphoserine intermediate. Mg(2+) contacts are provided by Ser102, Asp242, Asp244, and Asp246. Ser102 carries the phosphoserine modification.

It belongs to the phosphohexose mutase family. The cofactor is Mg(2+). Post-translationally, activated by phosphorylation.

The enzyme catalyses alpha-D-glucosamine 1-phosphate = D-glucosamine 6-phosphate. Functionally, catalyzes the conversion of glucosamine-6-phosphate to glucosamine-1-phosphate. This chain is Phosphoglucosamine mutase, found in Staphylococcus aureus (strain bovine RF122 / ET3-1).